Here is a 670-residue protein sequence, read N- to C-terminus: Solute carrier organic anion transporter family member 1A5 (670 aa).

The Cytoplasmic portion of the chain corresponds to 1–20 (MGETEKRVATHEVRCFSKIK). The chain crosses the membrane as a helical span at residues 21 to 40 (MFLLALTWAYVSKSLSGIYM). At 41 to 59 (NTMLTQIERQFDIPTSIVG) the chain is on the extracellular side. Residues 60–80 (FINGSFEIGNLLLIIFVSYFG) form a helical membrane-spanning segment. At 81–86 (TKLHRP) the chain is on the cytoplasmic side. Residues 87–111 (IMIGVGCVIMGLGCFLMSLPHFLMG) traverse the membrane as a helical segment. Residues 112–155 (RYEYETTISPTSNLSSNSFLCMENRSQTLKPTQDPAECIKEMKS) are Extracellular-facing. 2 N-linked (GlcNAc...) asparagine glycosylation sites follow: asparagine 124 and asparagine 135. The helical transmembrane segment at 156 to 184 (LMWIYVLVGNIIRGIGETPIMPLGISYIE) threads the bilayer. Residues 185–203 (DFAKSENSPLYIGILETGK) lie on the Cytoplasmic side of the membrane. A helical transmembrane segment spans residues 204 to 224 (VFGPIVGLLLGSFCASIYVDT). Topologically, residues 225–242 (GSVNTDDLTITPTDTRWV) are extracellular. Residues 243–267 (GAWWIGFLICAGVNILSSIPFFFFP) traverse the membrane as a helical segment. Over 268-311 (KTLPKEGLQDDVDGTNNDKEEKHREKAKEENRGITKDFLPFMKS) the chain is Cytoplasmic. The helical transmembrane segment at 312–333 (LSCNPIYMLLILTSVLQINAFI) threads the bilayer. At 334–353 (NMFTFLPKYLEQQYGKSTAE) the chain is on the extracellular side. A helical membrane pass occupies residues 354-377 (VVLLIGVYNLPPICIGYLLIGFIM). Topologically, residues 378–381 (KKFK) are cytoplasmic. A helical transmembrane segment spans residues 382-405 (ITVKKAAYMAFCLSLFEYLLYFLH). At 406 to 513 (FMITCDNFPV…PECANKLQYF (108 aa)) the chain is on the extracellular side. Positions 433–488 (NKVLADCNRGCSCSTNSWDPVCGDNGLAYMSACLAGCKKSVGTGTNMVFQNCSCIR) constitute a Kazal-like domain. Cystine bridges form between cysteine 439-cysteine 469, cysteine 445-cysteine 465, and cysteine 454-cysteine 486. N-linked (GlcNAc...) asparagine glycans are attached at residues asparagine 483 and asparagine 492. Residues 514 to 536 (LIMSVIGSFIYSITAIPGYMVLL) traverse the membrane as a helical segment. Over 537–545 (RCIKPEEKS) the chain is Cytoplasmic. The helical transmembrane segment at 546–571 (LGIGLHAFCTRVFAGIPAPIYFGALI) threads the bilayer. Topologically, residues 572 to 605 (DRTCLHWGTLKCGEPGACRMYNINNFRRIYLVLP) are extracellular. A helical membrane pass occupies residues 606–623 (AALRGSSYLPALFILILM). Residues 624–670 (RKFQFPGEIDSSETELAEMKITVKKSECTDVHGSPQVENDGELKTRL) are Cytoplasmic-facing.

The protein belongs to the organo anion transporter (TC 2.A.60) family. As to expression, highly expressed in the kidney, moderately abundant in the retina, and even lower in the liver. Expressed (at protein level) in the small intestine. Expressed at lower levels in brain,lung, and retina.

The protein localises to the cell membrane. Its subcellular location is the basal cell membrane. It catalyses the reaction taurocholate(out) = taurocholate(in). The enzyme catalyses glycocholate(out) = glycocholate(in). The catalysed reaction is taurochenodeoxycholate(out) = taurochenodeoxycholate(in). It carries out the reaction tauroursodeoxycholate(out) = tauroursodeoxycholate(in). It catalyses the reaction 3,3',5'-triiodo-L-thyronine(out) = 3,3',5'-triiodo-L-thyronine(in). The enzyme catalyses L-thyroxine(out) = L-thyroxine(in). The catalysed reaction is taurodeoxycholate(out) = taurodeoxycholate(in). It carries out the reaction glycodeoxycholate(out) = glycodeoxycholate(in). It catalyses the reaction glycochenodeoxycholate(out) = glycochenodeoxycholate(in). The enzyme catalyses glycoursodeoxycholate(out) = glycoursodeoxycholate(in). The catalysed reaction is estrone 3-sulfate(out) = estrone 3-sulfate(in). It carries out the reaction prostaglandin E2(out) = prostaglandin E2(in). It catalyses the reaction substance P(out) = substance P(in). Functionally, na(+)-independent transporter that mediates the cellular uptake of a broad range of organic anions such as the endogenous bile salts cholate and deoxycholate, either in their unconjugated or conjugated forms (taurocholate and glycocholate), estrone 3-sulfate and prostaglandin E2, at the plasma membrane. Responsible for intestinal absorption of bile acids. Capable of thyroid hormone transport (both T3 or 3,3',5'-triiodo-L-thyronine, and T4 or L-tyroxine). Plays roles in blood-brain and -cerebrospinal fluid barrier transport of organic anions and signal mediators, and in hormone uptake by neural cells. May also play a role in the reuptake of neuropeptides such as substance P/TAC1 and vasoactive intestinal peptide/VIP released from retinal neurons. Shows a pH-sensitive substrate specificity which may be ascribed to the protonation state of the binding site and leads to a stimulation of substrate transport in an acidic microenvironment. Hydrogencarbonate/HCO3(-) acts as the probable counteranion that exchanges for organic anions. May contribute to regulate the transport of organic compounds in testis across the blood-testis-barrier. This Rattus norvegicus (Rat) protein is Solute carrier organic anion transporter family member 1A5 (Slco1a5).